The chain runs to 414 residues: Enterobactin exporter EntS (414 aa).

At 1–21 (MNRQSWLLNLSLLKTHPAFRA) the chain is on the cytoplasmic side. The helical transmembrane segment at 22–42 (VFLARFISIVSLGLLGVAVPV) threads the bilayer. The Periplasmic portion of the chain corresponds to 43-55 (QIQMMTHSTWQVG). The chain crosses the membrane as a helical span at residues 56–76 (LSVTLTGGAMFIGLMVGGVLA). Over 77–83 (DRYERKK) the chain is Cytoplasmic. Residues 84-104 (VILLARGTCGIGFIGLCVNSL) traverse the membrane as a helical segment. At 105–109 (LPEPS) the chain is on the periplasmic side. The chain crosses the membrane as a helical span at residues 110–130 (LLAIYLLGLWDGFFASLGVTA). Over 131-156 (LLAATPALVGRENLMQAGAITMLTVR) the chain is Cytoplasmic. The helical transmembrane segment at 157–177 (LGSVISPMLGGILLASGGVAW) threads the bilayer. A topological domain (periplasmic) is located at residue N178. The chain crosses the membrane as a helical span at residues 179-199 (YGLAAAGTFITLLPLLTLPRL). The Cytoplasmic portion of the chain corresponds to 200–218 (PVPPQPRENPFIALLAAFR). The helical transmembrane segment at 219–239 (FLLASPLIGGIALLGGLVTMA) threads the bilayer. Topologically, residues 240–256 (SAVRVLYPALAMSWQMS) are periplasmic. The chain crosses the membrane as a helical span at residues 257 to 277 (AAQIGLLYAAIPLGAAIGALT). At 278 to 287 (SGQLAHSVRP) the chain is on the cytoplasmic side. A helical membrane pass occupies residues 288–307 (GLIMLVSTVGSFLAVGLFAI). Residues 308-313 (MPVWTA) lie on the Periplasmic side of the membrane. The chain crosses the membrane as a helical span at residues 314 to 336 (GVICLALFGWLSAISSLLQYTLL). At 337-356 (QTQTPENMLGRMNGLWTAQN) the chain is on the cytoplasmic side. A helical transmembrane segment spans residues 357–377 (VTGDAIGAALLGGLGAMMTPV). A topological domain (periplasmic) is located at residue A378. The chain crosses the membrane as a helical span at residues 379–399 (SASVSGFGLVIIGLLLLLVLG). Over 400–414 (ELRRFRQTPPVSDAG) the chain is Cytoplasmic.

It belongs to the major facilitator superfamily. EntS (TC 2.A.1.38) family.

It is found in the cell inner membrane. Component of an export pathway for enterobactin. This Salmonella choleraesuis (strain SC-B67) protein is Enterobactin exporter EntS.